A 130-amino-acid chain; its full sequence is Small ribosomal subunit protein uS8 (130 aa).

It belongs to the universal ribosomal protein uS8 family. As to quaternary structure, part of the 30S ribosomal subunit. Contacts proteins S5 and S12.

Functionally, one of the primary rRNA binding proteins, it binds directly to 16S rRNA central domain where it helps coordinate assembly of the platform of the 30S subunit. The sequence is that of Small ribosomal subunit protein uS8 from Buchnera aphidicola subsp. Baizongia pistaciae (strain Bp).